Here is a 587-residue protein sequence, read N- to C-terminus: DELLA protein RGA (587 aa).

A disordered region spans residues 1–26; sequence MKRDHHQFQGRLSNHGTSSSSSSISK. Positions 44–48 match the DELLA motif motif; that stretch reads DELLA. The LEXLE motif signature appears at 66-70; that stretch reads LEQLE. Residues 89–93 carry the VHYNP motif motif; the sequence is VHYNP. Residues 152–181 form a disordered region; the sequence is IDSSSSSNNQNKRLKSCSSPDSMVTSTSTG. Over residues 153 to 175 the composition is skewed to polar residues; that stretch reads DSSSSSNNQNKRLKSCSSPDSMV. The GRAS domain occupies 212 to 581; it reads VDSQENGVRL…RPLITTSAWK (370 aa). Residues 219-273 form a leucine repeat I (LRI) region; sequence VRLVHALMACAEAIQQNNLTLAEALVKQIGCLAVSQAGAMRKVATYFAEALARRI. The segment at 292–357 is VHIID; sequence QMHFYETCPY…GGPPTFRLTG (66 aa). Residues 323–327 carry the VHIID motif; that stretch reads VHVID. The segment at 371–403 is leucine repeat II (LRII); sequence EVGCKLAQLAEAIHVEFEYRGFVANSLADLDAS. Residues 415 to 502 form a PFYRE region; it reads VAVNSVFELH…EVYLGKQICN (88 aa). The LXXLL motif signature appears at 423–427; sequence LHKLL. Residues 505-581 form an SAW region; it reads ACEGPDRVER…RPLITTSAWK (77 aa).

This sequence belongs to the GRAS family. DELLA subfamily. In terms of assembly, interacts directly with the GID2/SLY1 component of the SCF(GID2) complex. Interacts (via N-terminus) with GID1A, GID1B and GID1B (via N-terminus). Binds to bHLH transcription factors such as MYC2, PIF1, PIF4, PIF6 and SPT. Interacts with the BOI proteins BOI, BRG1, BRG2 and BRG3. Interacts with NFYC9. Interacts with TOPP4. Interacts with FLZ5. Binds to zinc finger proteins MGP/IDD3, IDD4, IDD5, BIB/IDD9 and JKD/IDD10 in the nucleus. Binds to and coactivates GAF1/IDD2 and ENY/IDD1. Binds to PDF2 and ATML1. In terms of processing, phosphorylated. Phosphorylation may increase the interaction with GID2. Gibberellin (GA) induces dephosphorylation of RGA by TOPP4 and subsequent degradation by the proteasomal pathway. Post-translationally, ubiquitinated. Upon GA application it is ubiquitinated by the SCF(GID2) complex, leading to its subsequent degradation. In terms of processing, O-fucosylated by SPY. O-fucosylation enhances RGA activity by promoting RGA binding to key transcription factors in brassinosteroid and light signaling pathways. In terms of tissue distribution, ubiquitously expressed. Expressed in roots, rosette leaves, bolting and mature stems, young and mature siliques, flower buds and influorescences.

Its subcellular location is the nucleus. Probable transcriptional regulator that acts as a repressor of the gibberellin (GA) signaling pathway. Probably acts by participating in large multiprotein complexes that repress transcription of GA-inducible genes. Positively regulates XERICO expression in seeds. Upon GA application, it is degraded by the proteasome, allowing the GA signaling pathway. Compared to other DELLA proteins, it is the most sensitive to GA application. No effect of the BOI proteins on its stability. Its activity is probably regulated by other phytohormones such as auxin and ethylene, attenuation of auxin transport delaying its GA-induced degradation. Involved in the regulation of seed dormancy and germination, including glucose-induced delay of seed germination. The polypeptide is DELLA protein RGA (Arabidopsis thaliana (Mouse-ear cress)).